We begin with the raw amino-acid sequence, 485 residues long: Aldehyde dehydrogenase family 3 member A2 (485 aa).

The Cytoplasmic portion of the chain corresponds to M1–K463. G185–G190 contributes to the NAD(+) binding site. Active-site residues include E207 and C241. S293 is modified (phosphoserine). The chain crosses the membrane as a helical span at residues L464–Y484. The Prevents secretion from ER motif lies at K481–Y484.

This sequence belongs to the aldehyde dehydrogenase family. In terms of assembly, homodimer.

The protein localises to the microsome membrane. The protein resides in the endoplasmic reticulum membrane. It carries out the reaction an aldehyde + NAD(+) + H2O = a carboxylate + NADH + 2 H(+). The catalysed reaction is a fatty aldehyde + NAD(+) + H2O = a fatty acid + NADH + 2 H(+). It catalyses the reaction (2E)-hexadecenal + NAD(+) + H2O = (E)-hexadec-2-enoate + NADH + 2 H(+). The enzyme catalyses hexadecanoate + NADH + 2 H(+) = hexadecanal + NAD(+) + H2O. It carries out the reaction 22-oxodocosanoate + NAD(+) + H2O = docosanedioate + NADH + 2 H(+). The catalysed reaction is 2,6,10,14-tetramethylpentadecanal + NAD(+) + H2O = 2,6,10,14-tetramethylpentadecanoate + NADH + 2 H(+). It catalyses the reaction octadecanal + NAD(+) + H2O = octadecanoate + NADH + 2 H(+). The enzyme catalyses dodecanoate + NADH + 2 H(+) = dodecanal + NAD(+) + H2O. It carries out the reaction decanal + NAD(+) + H2O = decanoate + NADH + 2 H(+). The catalysed reaction is tetradecanal + NAD(+) + H2O = tetradecanoate + NADH + 2 H(+). It catalyses the reaction octanal + NAD(+) + H2O = octanoate + NADH + 2 H(+). The enzyme catalyses heptanal + NAD(+) + H2O = heptanoate + NADH + 2 H(+). It carries out the reaction (2E,6E)-farnesal + NAD(+) + H2O = (2E,6E)-farnesoate + NADH + 2 H(+). In terms of biological role, catalyzes the oxidation of medium and long-chain aliphatic aldehydes to fatty acids. Active on a variety of saturated and unsaturated aliphatic aldehydes between 6 and 24 carbons in length. Responsible for conversion of the sphingosine 1-phosphate (S1P) degradation product hexadecenal to hexadecenoic acid. This Pongo abelii (Sumatran orangutan) protein is Aldehyde dehydrogenase family 3 member A2 (ALDH3A2).